The chain runs to 126 residues: Fluoride-specific ion channel FluC (126 aa).

Transmembrane regions (helical) follow at residues 5–25, 39–59, 69–89, and 103–123; these read FILA…LVGI, TLFI…LFAV, IFLV…SLDT, and AYMI…IQIV. Na(+) contacts are provided by Gly77 and Thr80.

The protein belongs to the fluoride channel Fluc/FEX (TC 1.A.43) family.

It is found in the cell inner membrane. It carries out the reaction fluoride(in) = fluoride(out). With respect to regulation, na(+) is not transported, but it plays an essential structural role and its presence is essential for fluoride channel function. In terms of biological role, fluoride-specific ion channel. Important for reducing fluoride concentration in the cell, thus reducing its toxicity. The sequence is that of Fluoride-specific ion channel FluC from Nitrobacter winogradskyi (strain ATCC 25391 / DSM 10237 / CIP 104748 / NCIMB 11846 / Nb-255).